The sequence spans 336 residues: Aromatic prenyltransferase (336 aa).

It belongs to the aromatic prenyltransferase family.

In terms of biological role, prenyltransferase that attaches isoprenoid moieties to carbon atoms of aromatic substrates in an enzyme-catalyzed Friedel-Crafts reaction. Shows specificity for dimethylallyl diphosphate (DMAPP) and does not accept geranyl diphosphate (GPP) or isopentenyl diphosphate (IPP). Prenylates the artificial substrate 2,7-dihydroxynaphthalene (2,7-DHN), as well as dihydrophenazine-1-carboxylic acid at a lower level. Only traces of products are detected with aspulvinone E, flaviolin, or 4-hydroxybenzoic acid as substrates; and no product is formed with L-tryptophan, L-tyrosine, or 4-hydroxyphenylpyruvate. Ptf seems no to be involved in the prenylation reaction in the biosynthesis of aspulvinone H and J and the physiological function of ptf remains unknown. In Aspergillus terreus (strain NIH 2624 / FGSC A1156), this protein is Aromatic prenyltransferase.